The following is a 77-amino-acid chain: U8-lycotoxin-Ls1j (77 aa).

Residues 1-20 (MKLIIFTGLILFAIVSLIEA) form the signal peptide. A propeptide spanning residues 21-26 (QANNEK) is cleaved from the precursor.

Belongs to the neurotoxin 19 (CSTX) family. 08 (U8-Lctx) subfamily. Post-translationally, contains 4 disulfide bonds. Expressed by the venom gland.

It localises to the secreted. The polypeptide is U8-lycotoxin-Ls1j (Lycosa singoriensis (Wolf spider)).